The following is a 350-amino-acid chain: tRNA uridine(34) hydroxylase (350 aa).

Residues 146 to 240 (DDPDAVFIDM…YARRARAQGL (95 aa)) enclose the Rhodanese domain. Cys200 serves as the catalytic Cysteine persulfide intermediate. Residues 319–328 (RRRRAGRENG) are compositionally biased toward basic and acidic residues. The disordered stretch occupies residues 319–350 (RRRRAGRENGNKIFNKSRGRLNSKLSIPDPAE).

It belongs to the TrhO family.

The catalysed reaction is uridine(34) in tRNA + AH2 + O2 = 5-hydroxyuridine(34) in tRNA + A + H2O. Its function is as follows. Catalyzes oxygen-dependent 5-hydroxyuridine (ho5U) modification at position 34 in tRNAs. This Salmonella paratyphi B (strain ATCC BAA-1250 / SPB7) protein is tRNA uridine(34) hydroxylase.